The following is an 807-amino-acid chain: Anaphase-promoting complex subunit 4 (807 aa).

At tyrosine 469 the chain carries Phosphotyrosine. The interval 755-788 (DESSDDEEEAGGKPVKIKEEVLSESETEAHQDAA) is disordered. Residues serine 757 and serine 758 each carry the phosphoserine modification. Over residues 770–785 (KIKEEVLSESETEAHQ) the composition is skewed to basic and acidic residues. Lysine 772 participates in a covalent cross-link: Glycyl lysine isopeptide (Lys-Gly) (interchain with G-Cter in SUMO2). 2 positions are modified to phosphoserine: serine 777 and serine 779. Lysine 797 participates in a covalent cross-link: Glycyl lysine isopeptide (Lys-Gly) (interchain with G-Cter in SUMO2).

This sequence belongs to the APC4 family. The mammalian APC/C is composed at least of 14 distinct subunits ANAPC1, ANAPC2, CDC27/APC3, ANAPC4, ANAPC5, CDC16/APC6, ANAPC7, CDC23/APC8, ANAPC10, ANAPC11, CDC26/APC12, ANAPC13, ANAPC15 and ANAPC16 that assemble into a complex of at least 19 chains with a combined molecular mass of around 1.2 MDa; APC/C interacts with FZR1 and FBXO5. In the context of the APC/C complex, directly interacts with UBE2S. Interacts with FBXO43.

Its subcellular location is the nucleus. The protein operates within protein modification; protein ubiquitination. Its function is as follows. Component of the anaphase promoting complex/cyclosome (APC/C), a cell cycle-regulated E3 ubiquitin ligase that controls progression through mitosis and the G1 phase of the cell cycle. The APC/C complex acts by mediating ubiquitination and subsequent degradation of target proteins: it mainly mediates the formation of 'Lys-11'-linked polyubiquitin chains and, to a lower extent, the formation of 'Lys-48'- and 'Lys-63'-linked polyubiquitin chains. The APC/C complex catalyzes assembly of branched 'Lys-11'-/'Lys-48'-linked branched ubiquitin chains on target proteins. This Mus musculus (Mouse) protein is Anaphase-promoting complex subunit 4 (Anapc4).